The primary structure comprises 229 residues: Trehalose-6-phosphate phosphatase-related protein (229 aa).

The active-site Nucleophile is the aspartate 5. Residues aspartate 5, aspartate 7, and aspartate 177 each coordinate Mg(2+). 5 to 7 (DYD) lines the substrate pocket.

The protein belongs to the trehalose phosphatase family. Mg(2+) is required as a cofactor.

The catalysed reaction is alpha,alpha-trehalose 6-phosphate + H2O = alpha,alpha-trehalose + phosphate. It functions in the pathway glycan biosynthesis; trehalose biosynthesis. In terms of biological role, removes the phosphate from trehalose 6-phosphate (Tre6P) to produce free trehalose. Also catalyzes the dephosphorylation of para-nitrophenyl phosphate (pNPP), but with lesser efficiency (in vitro). This is Trehalose-6-phosphate phosphatase-related protein from Thermoplasma acidophilum (strain ATCC 25905 / DSM 1728 / JCM 9062 / NBRC 15155 / AMRC-C165).